We begin with the raw amino-acid sequence, 156 residues long: UPF0262 protein Jann_2882 (156 aa).

Belongs to the UPF0262 family.

The chain is UPF0262 protein Jann_2882 from Jannaschia sp. (strain CCS1).